A 227-amino-acid polypeptide reads, in one-letter code: UPF0758 protein Pcryo_2119 (227 aa).

The MPN domain occupies 102–224; that stretch reads GLGRSQMVKD…TLSYAENSLP (123 aa). Zn(2+) contacts are provided by H173, H175, and D186. A JAMM motif motif is present at residues 173-186; it reads HNHPHTDAKPSTAD.

This sequence belongs to the UPF0758 family.

The polypeptide is UPF0758 protein Pcryo_2119 (Psychrobacter cryohalolentis (strain ATCC BAA-1226 / DSM 17306 / VKM B-2378 / K5)).